The sequence spans 262 residues: Acyl-[acyl-carrier-protein]--UDP-N-acetylglucosamine O-acyltransferase (262 aa).

This sequence belongs to the transferase hexapeptide repeat family. LpxA subfamily. As to quaternary structure, homotrimer.

Its subcellular location is the cytoplasm. It carries out the reaction a (3R)-hydroxyacyl-[ACP] + UDP-N-acetyl-alpha-D-glucosamine = a UDP-3-O-[(3R)-3-hydroxyacyl]-N-acetyl-alpha-D-glucosamine + holo-[ACP]. Its pathway is glycolipid biosynthesis; lipid IV(A) biosynthesis; lipid IV(A) from (3R)-3-hydroxytetradecanoyl-[acyl-carrier-protein] and UDP-N-acetyl-alpha-D-glucosamine: step 1/6. Functionally, involved in the biosynthesis of lipid A, a phosphorylated glycolipid that anchors the lipopolysaccharide to the outer membrane of the cell. The chain is Acyl-[acyl-carrier-protein]--UDP-N-acetylglucosamine O-acyltransferase from Burkholderia mallei (strain NCTC 10247).